The primary structure comprises 294 residues: Cytidine deaminase (294 aa).

CMP/dCMP-type deaminase domains follow at residues 48-168 and 186-294; these read DEDA…FGPK and LTGD…VLLA. Residue 89 to 91 participates in substrate binding; it reads NME. A Zn(2+)-binding site is contributed by His102. Residue Glu104 is the Proton donor of the active site. Zn(2+)-binding residues include Cys129 and Cys132.

Belongs to the cytidine and deoxycytidylate deaminase family. Homodimer. Requires Zn(2+) as cofactor.

The catalysed reaction is cytidine + H2O + H(+) = uridine + NH4(+). The enzyme catalyses 2'-deoxycytidine + H2O + H(+) = 2'-deoxyuridine + NH4(+). This enzyme scavenges exogenous and endogenous cytidine and 2'-deoxycytidine for UMP synthesis. In Escherichia coli (strain ATCC 8739 / DSM 1576 / NBRC 3972 / NCIMB 8545 / WDCM 00012 / Crooks), this protein is Cytidine deaminase.